Consider the following 407-residue polypeptide: MSYPDDYSTDIEKNKMDLKEFKEKTQIAELESKVLRLELKNKDVTRENVQIKKENEILKRELDKLRIPPLILGTILDKVNERKAVVKSSTGPNFLVNLSQFVDPEDIVPGARVCLNQQTLAIVEVLPKEKDYRAMAMEIEEKPDISFEDIGGLNNQIRDIKEVVELPLKNPELFEKVGIVPPKGVLLYGPPGTGKTLLAKAVAYETNASFVRVVGSELVKKFIGEGAKLVRDVFKLAKEKSPCIIFIDEIDAVASKRTESLTGGDREVQRTLMQLLAEMDGFDSRGDVKIIAATNRPDILDPAILRPGRFDRIIEISMPDEDGRLEILKIHTEKMNLKNVDLREVAKLAENMVGADLKAVCTEAGMFAIREEREFIKMDDFKEAISKITGKKEKCSYDMPQLTVMYG.

Residues 22-67 (KEKTQIAELESKVLRLELKNKDVTRENVQIKKENEILKRELDKLRI) adopt a coiled-coil conformation. ATP is bound by residues 192-197 (GTGKTL) and H331. The tract at residues 405–407 (MYG) is docks into pockets in the proteasome alpha-ring to cause gate opening.

This sequence belongs to the AAA ATPase family. In terms of assembly, homohexamer. The hexameric complex has a two-ring architecture resembling a top hat that caps the 20S proteasome core at one or both ends. Upon ATP-binding, the C-terminus of PAN interacts with the alpha-rings of the proteasome core by binding to the intersubunit pockets.

The protein localises to the cytoplasm. In terms of biological role, ATPase which is responsible for recognizing, binding, unfolding and translocation of substrate proteins into the archaeal 20S proteasome core particle. Is essential for opening the gate of the 20S proteasome via an interaction with its C-terminus, thereby allowing substrate entry and access to the site of proteolysis. Thus, the C-termini of the proteasomal ATPase function like a 'key in a lock' to induce gate opening and therefore regulate proteolysis. Unfolding activity requires energy from ATP hydrolysis, whereas ATP binding alone promotes ATPase-20S proteasome association which triggers gate opening, and supports translocation of unfolded substrates. This chain is Proteasome-activating nucleotidase, found in Methanococcus maripaludis (strain C7 / ATCC BAA-1331).